Consider the following 860-residue polypeptide: Mycobactin import ATP-binding/permease protein IrtA (860 aa).

The Cytoplasmic segment spans residues 1–293; sequence MARGIQGVMM…GRLLAPLKTT (293 aa). The region spanning 15–124 is the FAD-binding FR-type domain; it reads ARDHQATVVS…LGSAGFSVPE (110 aa). Residues 70–73, 87–91, 97–98, and 238–240 contribute to the FAD site; these read RAYT, DVVLH, AS, and TEG. The tract at residues 242–275 is disordered; that stretch reads AMGTKRGDDDKTPEVNPAPRADKPEAPAPAAAGR. The chain crosses the membrane as a helical span at residues 294–314; it reads LIISGVLQAIITLVQLAPFVL. In terms of domain architecture, ABC transmembrane type-1 spans 295-577; sequence IISGVLQAII…IAYGLGGIRG (283 aa). Residues 315–335 are Periplasmic-facing; sequence LVELARLLLSGASSDRLWTLG. A helical transmembrane segment spans residues 336–356; that stretch reads VVAISLLGTGSFLAAALTLWL. Residues 357 to 409 are Cytoplasmic-facing; sequence HLVDARFARDLRTGLLTKMSRLPLGWFTARGSGSIKQLVQDDTLSLHYLITHA. Residues 410–430 form a helical membrane-spanning segment; sequence IPDAVAAVIAPVAVLVYLFVV. Residues 431 to 433 are Periplasmic-facing; the sequence is DWR. The chain crosses the membrane as a helical span at residues 434-454; the sequence is LALVMFVPVLIYLVLMTVMTI. The Cytoplasmic portion of the chain corresponds to 455–525; sequence QSGPKIAQSQ…KKSMMDLVTR (71 aa). The chain crosses the membrane as a helical span at residues 526-546; that stretch reads PGTFLWLIVAVGTPMITSGAM. The Periplasmic portion of the chain corresponds to 547–550; the sequence is DPVD. The helical transmembrane segment at 551–571 threads the bilayer; it reads ILPFLLLGTTFGVRLLGIAYG. At 572 to 860 the chain is on the cytoplasmic side; that stretch reads LGGIRGGMLA…AAGPTGEAVR (289 aa). The 234-residue stretch at 609–842 folds into the ABC transporter domain; the sequence is VVFDNVTFGY…AGRYRQLWET (234 aa). 642–649 provides a ligand contact to ATP; it reads GPSGSGKS.

It belongs to the ABC transporter superfamily. Siderophore-Fe(3+) uptake transporter (SIUT) (TC 3.A.1.21) family. In terms of assembly, forms a heterodimer with IrtB. It depends on FAD as a cofactor.

It localises to the cell inner membrane. Part of the ABC transporter complex IrtAB involved in the import of iron-bound mycobactin (Fe-MBT) and carboxymycobactin (Fe-cMBT). Has a preference for Fe-MBT over Fe-cMBT. Mycobactins are then reduced by the siderophore interaction domain to facilitate iron release in the bacterial cell. Transmembrane domains (TMD) form a pore in the membrane and the ATP-binding domain (NBD) is responsible for energy generation. The polypeptide is Mycobactin import ATP-binding/permease protein IrtA (Mycolicibacterium smegmatis (strain ATCC 700084 / mc(2)155) (Mycobacterium smegmatis)).